Here is a 412-residue protein sequence, read N- to C-terminus: Argininosuccinate synthase (412 aa).

ATP contacts are provided by residues 11 to 19 and A37; that span reads AYSGGLDTS. Residues Y88 and S93 each coordinate L-citrulline. Position 116–124 (116–124) interacts with ATP; it reads SHGATGKGN. L-aspartate is bound by residues T120, N124, and D125. L-citrulline is bound at residue N124. L-citrulline-binding residues include R128, S181, S190, E271, and Y283.

This sequence belongs to the argininosuccinate synthase family. Homotetramer.

The protein resides in the cytoplasm. The protein localises to the cytosol. It carries out the reaction L-citrulline + L-aspartate + ATP = 2-(N(omega)-L-arginino)succinate + AMP + diphosphate + H(+). Its pathway is amino-acid biosynthesis; L-arginine biosynthesis; L-arginine from L-ornithine and carbamoyl phosphate: step 2/3. It functions in the pathway nitrogen metabolism; urea cycle; (N(omega)-L-arginino)succinate from L-aspartate and L-citrulline: step 1/1. In terms of biological role, one of the enzymes of the urea cycle, the metabolic pathway transforming neurotoxic amonia produced by protein catabolism into inocuous urea in the liver of ureotelic animals. Catalyzes the formation of arginosuccinate from aspartate, citrulline and ATP and together with ASL it is responsible for the biosynthesis of arginine in most body tissues. The chain is Argininosuccinate synthase from Xenopus tropicalis (Western clawed frog).